Reading from the N-terminus, the 395-residue chain is Protein phosphatase methylesterase 1 (395 aa).

Residues serine 194, aspartate 222, and histidine 348 contribute to the active site.

It belongs to the AB hydrolase superfamily.

It carries out the reaction [phosphatase 2A protein]-C-terminal L-leucine methyl ester + H2O = [phosphatase 2A protein]-C-terminal L-leucine + methanol + H(+). Functionally, demethylates proteins that have been reversibly carboxymethylated. Demethylates the phosphatase PP2A catalytic subunit. In Kluyveromyces lactis (strain ATCC 8585 / CBS 2359 / DSM 70799 / NBRC 1267 / NRRL Y-1140 / WM37) (Yeast), this protein is Protein phosphatase methylesterase 1 (PPE1).